A 657-amino-acid chain; its full sequence is MALDITFPDGNVKQFPDGTTVKAITEGISNSLAKKAVAGKLDGDLIAYDEPIAHSGQLQIMTKDDAEGLTVLRQTAAFVLAAALKDLYPDIHFGQGQATEDGFYYDTDRADGQVSVDDLPTVQKKMEAIIKENAALEPVVLSRAEAFQAFKNDPFKKQLVEAAGDPIKGYKLGDFVDFEEKVLLPSLKDLKHLKLLSVAGAYWQGKSSNPMLQRIYGTAYWSEKGLEDDAKRRQEAAEHDHRVIGRDLDLFFVDPKVGAGLPYWMPNGATIRRVIERYIIDKEIADGYEHVYTPVLANLDLYKTSGHWDHYREDMFPPMDMGDGEMLELRPMNCPSHIQIYNHHIRSYRELPLRIAELGMMHRYEKSGALSGLQRVREMTLNDGHTFVALDQVQEEFKKILRLIMDVYEDFNITDYSFRLSYRDPKNTEKYFDDDEMWTRSQSMLKGAMDDLKLDYYEAEGEAAFYGPKLDIQTKTALGNDETMSTIQLDFMLPERFNLTYVGKDGEEHRPVMIHRGIVGTMERFIAYLTEIYKGAFPTWLAPTQAVLIPVNNDLHLDYVNRIKKQMLVAGLRVKVDDRNEKMGYKIREAQTKKIPYTVVVGDKELNDAAVSVRRYGDEHTEEEAGNMFIDALVAEVKNYSRDGKTKPGEATKVLGD.

Residues 1–62 form the TGS domain; sequence MALDITFPDG…AHSGQLQIMT (62 aa). Positions 240–538 are catalytic; sequence DHRVIGRDLD…LTEIYKGAFP (299 aa). The Zn(2+) site is built by Cys334, His385, and His515.

The protein belongs to the class-II aminoacyl-tRNA synthetase family. In terms of assembly, homodimer. It depends on Zn(2+) as a cofactor.

It is found in the cytoplasm. It carries out the reaction tRNA(Thr) + L-threonine + ATP = L-threonyl-tRNA(Thr) + AMP + diphosphate + H(+). Functionally, catalyzes the attachment of threonine to tRNA(Thr) in a two-step reaction: L-threonine is first activated by ATP to form Thr-AMP and then transferred to the acceptor end of tRNA(Thr). Also edits incorrectly charged L-seryl-tRNA(Thr). The chain is Threonine--tRNA ligase from Lacticaseibacillus paracasei (strain ATCC 334 / BCRC 17002 / CCUG 31169 / CIP 107868 / KCTC 3260 / NRRL B-441) (Lactobacillus paracasei).